Consider the following 196-residue polypeptide: MQLKRVAEAKLPTPWGDFLMVGFEELATGHDHVALVYGDISEHTPVLARVHSECLTGDALFSLRCDCGFQLEAALTQIAEEGRGILLYHRQEGRNIGLLNKIRAYALQDQGYDTVEANHQLGFAADERDFTLCADMFKLLGVNEVRLLTNNPKKVEILTEAGINIVERVPLIVGRNPNNEHYLDTKAEKMGHLLNK.

Residue 49 to 53 coordinates GTP; it reads RVHSE. Zn(2+) contacts are provided by Cys54, Cys65, and Cys67. GTP contacts are provided by residues Gln70, 92–94, and Thr114; that span reads EGR. The Proton acceptor role is filled by Asp126. Catalysis depends on Arg128, which acts as the Nucleophile. The GTP site is built by Thr149 and Lys154.

The protein belongs to the GTP cyclohydrolase II family. In terms of assembly, homodimer. Zn(2+) is required as a cofactor.

The catalysed reaction is GTP + 4 H2O = 2,5-diamino-6-hydroxy-4-(5-phosphoribosylamino)-pyrimidine + formate + 2 phosphate + 3 H(+). It participates in cofactor biosynthesis; riboflavin biosynthesis; 5-amino-6-(D-ribitylamino)uracil from GTP: step 1/4. Functionally, catalyzes the conversion of GTP to 2,5-diamino-6-ribosylamino-4(3H)-pyrimidinone 5'-phosphate (DARP), formate and pyrophosphate. This chain is GTP cyclohydrolase-2, found in Shigella boydii serotype 18 (strain CDC 3083-94 / BS512).